The chain runs to 229 residues: Potassium/proton antiporter CemA (229 aa).

The next 3 membrane-spanning stretches (helical) occupy residues 7-27, 106-126, and 189-209; these read FSPI…YLSF, MILR…FYIW, and IISG…KYWI.

It belongs to the CemA family.

The protein resides in the plastid membrane. The catalysed reaction is K(+)(in) + H(+)(out) = K(+)(out) + H(+)(in). In terms of biological role, may be involved in proton extrusion. In Cuscuta reflexa (Southern Asian dodder), this protein is Potassium/proton antiporter CemA.